The sequence spans 571 residues: Proline--tRNA ligase (571 aa).

It belongs to the class-II aminoacyl-tRNA synthetase family. ProS type 1 subfamily. As to quaternary structure, homodimer.

The protein localises to the cytoplasm. The enzyme catalyses tRNA(Pro) + L-proline + ATP = L-prolyl-tRNA(Pro) + AMP + diphosphate. Its function is as follows. Catalyzes the attachment of proline to tRNA(Pro) in a two-step reaction: proline is first activated by ATP to form Pro-AMP and then transferred to the acceptor end of tRNA(Pro). As ProRS can inadvertently accommodate and process non-cognate amino acids such as alanine and cysteine, to avoid such errors it has two additional distinct editing activities against alanine. One activity is designated as 'pretransfer' editing and involves the tRNA(Pro)-independent hydrolysis of activated Ala-AMP. The other activity is designated 'posttransfer' editing and involves deacylation of mischarged Ala-tRNA(Pro). The misacylated Cys-tRNA(Pro) is not edited by ProRS. In Syntrophotalea carbinolica (strain DSM 2380 / NBRC 103641 / GraBd1) (Pelobacter carbinolicus), this protein is Proline--tRNA ligase.